Reading from the N-terminus, the 126-residue chain is Large ribosomal subunit protein bL17 (126 aa).

Belongs to the bacterial ribosomal protein bL17 family. In terms of assembly, part of the 50S ribosomal subunit. Contacts protein L32.

The sequence is that of Large ribosomal subunit protein bL17 from Nitrosococcus oceani (strain ATCC 19707 / BCRC 17464 / JCM 30415 / NCIMB 11848 / C-107).